A 581-amino-acid chain; its full sequence is Arginine--tRNA ligase (581 aa).

Residues 122-132 (PNVAKPMHVGH) carry the 'HIGH' region motif.

Belongs to the class-I aminoacyl-tRNA synthetase family. Monomer.

The protein resides in the cytoplasm. The enzyme catalyses tRNA(Arg) + L-arginine + ATP = L-arginyl-tRNA(Arg) + AMP + diphosphate. This is Arginine--tRNA ligase from Francisella tularensis subsp. tularensis (strain FSC 198).